A 309-amino-acid polypeptide reads, in one-letter code: Porphobilinogen deaminase (309 aa).

Cys242 is modified (S-(dipyrrolylmethanemethyl)cysteine).

Belongs to the HMBS family. In terms of assembly, monomer. Dipyrromethane serves as cofactor.

It carries out the reaction 4 porphobilinogen + H2O = hydroxymethylbilane + 4 NH4(+). It participates in porphyrin-containing compound metabolism; protoporphyrin-IX biosynthesis; coproporphyrinogen-III from 5-aminolevulinate: step 2/4. In terms of biological role, tetrapolymerization of the monopyrrole PBG into the hydroxymethylbilane pre-uroporphyrinogen in several discrete steps. This Pseudoalteromonas atlantica (strain T6c / ATCC BAA-1087) protein is Porphobilinogen deaminase.